A 1024-amino-acid polypeptide reads, in one-letter code: Isoleucine--tRNA ligase (1024 aa).

Positions 52-62 match the 'HIGH' region motif; sequence PTANGRPHVGH. The short motif at 590–594 is the 'KMSKS' region element; the sequence is KMSKS. K593 is an ATP binding site.

It belongs to the class-I aminoacyl-tRNA synthetase family. IleS type 2 subfamily. As to quaternary structure, monomer. The cofactor is Zn(2+).

Its subcellular location is the cytoplasm. The enzyme catalyses tRNA(Ile) + L-isoleucine + ATP = L-isoleucyl-tRNA(Ile) + AMP + diphosphate. In terms of biological role, catalyzes the attachment of isoleucine to tRNA(Ile). As IleRS can inadvertently accommodate and process structurally similar amino acids such as valine, to avoid such errors it has two additional distinct tRNA(Ile)-dependent editing activities. One activity is designated as 'pretransfer' editing and involves the hydrolysis of activated Val-AMP. The other activity is designated 'posttransfer' editing and involves deacylation of mischarged Val-tRNA(Ile). In Picrophilus torridus (strain ATCC 700027 / DSM 9790 / JCM 10055 / NBRC 100828 / KAW 2/3), this protein is Isoleucine--tRNA ligase.